Consider the following 360-residue polypeptide: Phospho-N-acetylmuramoyl-pentapeptide-transferase (360 aa).

The next 10 helical transmembrane spans lie at 27 to 47 (GATA…IAAL), 74 to 94 (TMGG…WANL), 99 to 119 (VWVV…DDYL), 135 to 155 (LLLE…LGTP), 165 to 185 (INGF…FVIV), 199 to 219 (GLAI…AYLA), 236 to 256 (AGEL…FLWF), 263 to 283 (IFMG…VAVA), 288 to 308 (IVLA…IVQV), and 337 to 357 (QVVV…LSTL).

It belongs to the glycosyltransferase 4 family. MraY subfamily. Requires Mg(2+) as cofactor.

It localises to the cell inner membrane. It carries out the reaction UDP-N-acetyl-alpha-D-muramoyl-L-alanyl-gamma-D-glutamyl-meso-2,6-diaminopimeloyl-D-alanyl-D-alanine + di-trans,octa-cis-undecaprenyl phosphate = di-trans,octa-cis-undecaprenyl diphospho-N-acetyl-alpha-D-muramoyl-L-alanyl-D-glutamyl-meso-2,6-diaminopimeloyl-D-alanyl-D-alanine + UMP. The protein operates within cell wall biogenesis; peptidoglycan biosynthesis. Catalyzes the initial step of the lipid cycle reactions in the biosynthesis of the cell wall peptidoglycan: transfers peptidoglycan precursor phospho-MurNAc-pentapeptide from UDP-MurNAc-pentapeptide onto the lipid carrier undecaprenyl phosphate, yielding undecaprenyl-pyrophosphoryl-MurNAc-pentapeptide, known as lipid I. In Methylocella silvestris (strain DSM 15510 / CIP 108128 / LMG 27833 / NCIMB 13906 / BL2), this protein is Phospho-N-acetylmuramoyl-pentapeptide-transferase.